The chain runs to 56 residues: U-megalopygitoxin(2)-Mo9 (56 aa).

An N-terminal signal peptide occupies residues methionine 1–proline 25. Glutamine 26 is subject to Pyrrolidone carboxylic acid. Threonine 55 is subject to Threonine amide.

This sequence belongs to the caterpillar 2 family. Post-translationally, contains 2 disulfide bonds. Expressed by the venom apparatus.

The protein resides in the secreted. Functionally, probable toxin. The polypeptide is U-megalopygitoxin(2)-Mo9 (Megalopyge opercularis (Southern flannel moth)).